Reading from the N-terminus, the 250-residue chain is Small ribosomal subunit protein uS3 (250 aa).

One can recognise a KH type-2 domain in the interval 39–111 (IRTLIKNHYP…KVQINIFEVK (73 aa)).

This sequence belongs to the universal ribosomal protein uS3 family. As to quaternary structure, part of the 30S ribosomal subunit. Forms a tight complex with proteins S10 and S14.

Functionally, binds the lower part of the 30S subunit head. Binds mRNA in the 70S ribosome, positioning it for translation. This Phytoplasma vitis (Flavescence doree phytoplasma) protein is Small ribosomal subunit protein uS3.